Consider the following 289-residue polypeptide: LysM and putative peptidoglycan-binding domain-containing protein 4 (289 aa).

A disordered region spans residues 1-23 (MRLREGPTHSFQPPSSVHSSLGS). The Extracellular portion of the chain corresponds to 1-208 (MRLREGPTHS…PASGADWGIR (208 aa)). Over residues 9–23 (HSFQPPSSVHSSLGS) the composition is skewed to polar residues. Residues asparagine 30 and asparagine 59 are each glycosylated (N-linked (GlcNAc...) asparagine). The LysM domain occupies 71-115 (LERAITEDDNLNKLALQYGCKVSDIKRVNNLITDQDIYALKTIKI). N-linked (GlcNAc...) asparagine glycosylation is found at asparagine 134 and asparagine 178. Residues 209–229 (WWNAVFIMLLVGIVLPVFYIV) form a helical membrane-spanning segment. At 230–289 (YFKTQGDSEGTFSIEGRTNVSTSLSPHTNTGHSMEQMTQRTSGFSPGLLQDTHKLLNPGG) the chain is on the cytoplasmic side. Positions 252–272 (SLSPHTNTGHSMEQMTQRTSG) are disordered.

The protein resides in the membrane. The sequence is that of LysM and putative peptidoglycan-binding domain-containing protein 4 (lysmd4) from Xenopus laevis (African clawed frog).